The following is a 278-amino-acid chain: Orotidine 5'-phosphate decarboxylase (278 aa).

The active-site Proton donor is the Lys-96.

It belongs to the OMP decarboxylase family. Type 2 subfamily.

It catalyses the reaction orotidine 5'-phosphate + H(+) = UMP + CO2. It participates in pyrimidine metabolism; UMP biosynthesis via de novo pathway; UMP from orotate: step 2/2. The protein is Orotidine 5'-phosphate decarboxylase (pyrF) of Streptomyces coelicolor (strain ATCC BAA-471 / A3(2) / M145).